Consider the following 263-residue polypeptide: Dermonecrotic toxin SpaSicTox-betaIF1 (263 aa).

2 residues coordinate Mg(2+): glutamate 15 and aspartate 17. Histidine 31 serves as the catalytic Nucleophile. Cystine bridges form between cysteine 35-cysteine 41 and cysteine 37-cysteine 179. Aspartate 75 is a binding site for Mg(2+).

It belongs to the arthropod phospholipase D family. Class II subfamily. Mg(2+) is required as a cofactor. Expressed by the venom gland.

The protein resides in the secreted. It carries out the reaction an N-(acyl)-sphingosylphosphocholine = an N-(acyl)-sphingosyl-1,3-cyclic phosphate + choline. The enzyme catalyses an N-(acyl)-sphingosylphosphoethanolamine = an N-(acyl)-sphingosyl-1,3-cyclic phosphate + ethanolamine. The catalysed reaction is a 1-acyl-sn-glycero-3-phosphocholine = a 1-acyl-sn-glycero-2,3-cyclic phosphate + choline. It catalyses the reaction a 1-acyl-sn-glycero-3-phosphoethanolamine = a 1-acyl-sn-glycero-2,3-cyclic phosphate + ethanolamine. Its function is as follows. Dermonecrotic toxins cleave the phosphodiester linkage between the phosphate and headgroup of certain phospholipids (sphingolipid and lysolipid substrates), forming an alcohol (often choline) and a cyclic phosphate. This toxin acts on sphingomyelin (SM). It may also act on ceramide phosphoethanolamine (CPE), lysophosphatidylcholine (LPC) and lysophosphatidylethanolamine (LPE), but not on lysophosphatidylserine (LPS), and lysophosphatidylglycerol (LPG). It acts by transphosphatidylation, releasing exclusively cyclic phosphate products as second products. Induces dermonecrosis, hemolysis, increased vascular permeability, edema, inflammatory response, and platelet aggregation. The sequence is that of Dermonecrotic toxin SpaSicTox-betaIF1 from Sicarius patagonicus (Six-eyed sand spider).